The chain runs to 501 residues: Cytochrome P450 7A1 (501 aa).

A helical transmembrane segment spans residues 4 to 24 (ISLLGGIVTAVCCCLWLLLGM). Cysteine 441 lines the heme pocket.

This sequence belongs to the cytochrome P450 family. Requires heme as cofactor.

The protein localises to the endoplasmic reticulum membrane. The protein resides in the microsome membrane. The enzyme catalyses cholesterol + reduced [NADPH--hemoprotein reductase] + O2 = 7alpha-hydroxycholesterol + oxidized [NADPH--hemoprotein reductase] + H2O + H(+). The catalysed reaction is 4beta-hydroxycholesterol + reduced [NADPH--hemoprotein reductase] + O2 = 4beta,7alpha-dihydroxycholesterol + oxidized [NADPH--hemoprotein reductase] + H2O + H(+). It carries out the reaction lathosterol + reduced [NADPH--hemoprotein reductase] + O2 = 7alpha,8alpha-epoxy-5alpha-cholestan-3beta-ol + oxidized [NADPH--hemoprotein reductase] + H2O + H(+). It catalyses the reaction lathosterol + reduced [NADPH--hemoprotein reductase] + O2 = 5alpha-cholestan-7-oxo-3beta-ol + oxidized [NADPH--hemoprotein reductase] + H2O + H(+). The enzyme catalyses 7-dehydrocholesterol + reduced [NADPH--hemoprotein reductase] + O2 = 7-oxocholesterol + oxidized [NADPH--hemoprotein reductase] + H2O + H(+). The catalysed reaction is (24S)-hydroxycholesterol + reduced [NADPH--hemoprotein reductase] + O2 = (24S)-7alpha-dihydroxycholesterol + oxidized [NADPH--hemoprotein reductase] + H2O + H(+). It carries out the reaction (24R)-hydroxycholesterol + reduced [NADPH--hemoprotein reductase] + O2 = (24R)-7alpha-dihydroxycholesterol + oxidized [NADPH--hemoprotein reductase] + H2O + H(+). It participates in lipid metabolism; bile acid biosynthesis. Its pathway is steroid metabolism; cholesterol degradation. Its function is as follows. A cytochrome P450 monooxygenase involved in the metabolism of endogenous cholesterol and its oxygenated derivatives (oxysterols). Mechanistically, uses molecular oxygen inserting one oxygen atom into a substrate, and reducing the second into a water molecule, with two electrons provided by NADPH via cytochrome P450 reductase (CPR; NADPH-ferrihemoprotein reductase). Functions as a critical regulatory enzyme of bile acid biosynthesis and cholesterol homeostasis. Catalyzes the hydroxylation of carbon hydrogen bond at 7-alpha position of cholesterol, a rate-limiting step in cholesterol catabolism and bile acid biosynthesis. 7-alpha hydroxylates several oxysterols, including 4beta-hydroxycholesterol and 24-hydroxycholesterol. Catalyzes the oxidation of the 7,8 double bond of 7-dehydrocholesterol and lathosterol with direct and predominant formation of the 7-keto derivatives. The polypeptide is Cytochrome P450 7A1 (CYP7A1) (Sus scrofa (Pig)).